The following is a 149-amino-acid chain: Transcriptional repressor NrdR (149 aa).

Residues 3–34 fold into a zinc finger; sequence CPFCFAVDTKVIDSRLVGEGSSVRRRRQCLVC. The 91-residue stretch at 49-139 folds into the ATP-cone domain; it reads PRVIKSNDVR…VYRSFEDIKD (91 aa).

This sequence belongs to the NrdR family. It depends on Zn(2+) as a cofactor.

Its function is as follows. Negatively regulates transcription of bacterial ribonucleotide reductase nrd genes and operons by binding to NrdR-boxes. The sequence is that of Transcriptional repressor NrdR from Salmonella schwarzengrund (strain CVM19633).